A 282-amino-acid chain; its full sequence is Bifunctional protein FolD (282 aa).

Residues 164 to 166, Ile189, and Ile230 each bind NADP(+); that span reads GAS.

It belongs to the tetrahydrofolate dehydrogenase/cyclohydrolase family. As to quaternary structure, homodimer.

It catalyses the reaction (6R)-5,10-methylene-5,6,7,8-tetrahydrofolate + NADP(+) = (6R)-5,10-methenyltetrahydrofolate + NADPH. It carries out the reaction (6R)-5,10-methenyltetrahydrofolate + H2O = (6R)-10-formyltetrahydrofolate + H(+). Its pathway is one-carbon metabolism; tetrahydrofolate interconversion. Functionally, catalyzes the oxidation of 5,10-methylenetetrahydrofolate to 5,10-methenyltetrahydrofolate and then the hydrolysis of 5,10-methenyltetrahydrofolate to 10-formyltetrahydrofolate. The polypeptide is Bifunctional protein FolD (Nitratiruptor sp. (strain SB155-2)).